A 183-amino-acid polypeptide reads, in one-letter code: Large ribosomal subunit protein uL6 (183 aa).

The protein belongs to the universal ribosomal protein uL6 family. As to quaternary structure, part of the 50S ribosomal subunit.

In terms of biological role, this protein binds to the 23S rRNA, and is important in its secondary structure. It is located near the subunit interface in the base of the L7/L12 stalk, and near the tRNA binding site of the peptidyltransferase center. The protein is Large ribosomal subunit protein uL6 of Malacoplasma penetrans (strain HF-2) (Mycoplasma penetrans).